The sequence spans 727 residues: Pentatricopeptide repeat-containing protein At4g20740 (727 aa).

Residues 1–84 are disordered; sequence MKSPKPPNLS…PSPPSHSTVI (84 aa). Over residues 38 to 56 the composition is skewed to polar residues; it reads SNRQSIPRVSPQPQSNSLA. Residues 59–70 show a composition bias toward basic and acidic residues; that stretch reads TPFDLRKWDPET. 14 PPR repeats span residues 157–191, 192–226, 227–261, 262–296, 297–331, 332–366, 367–401, 402–436, 437–471, 506–540, 541–575, 576–606, 612–646, and 647–681; these read DFAAYNAFAYCLNRNGHFRAADQLPELMDSQGRPP, SEKQFEILIRMHADNRRGLRVYYVYEKMKKFGFKP, RVFLYNRIMDALVKNGYFDLALAVYEDFKEDGLVE, ESTTFMILVKGLCKAGRIEEMLEILQRMRENLCKP, DVFAYTAMIKTLVSEGNLDASLRVWDEMRRDEIKP, DVMAYGTLVVGLCKDGRVERGYELFMEMKGKQILI, DREIYRVLIEGFVADGKVRSACNLWEDLVDSGYIA, DIGIYNAVIKGLCSVNQVDKAYKLFQVAIEEELEP, DFETLSPIMVAYVVMNRLSDFSNVLERIGELGYPV, SVSVYNILMEALYKMGDIQKSLSLFYEMRKLGFEP, DSSSYSIAICCFVEKGDVKAACSFHEKIIEMSCVP, SIAAYLSLTKGLCQIGEIDAVMLLVRECLGN, MEFKYALTVCHVCKGSNAEKVMKVVDEMNQEGVFI, and NEVIYCAIISGMSKHGTIKVAREVFTELKKRKVMT.

Belongs to the PPR family. P subfamily.

The chain is Pentatricopeptide repeat-containing protein At4g20740 from Arabidopsis thaliana (Mouse-ear cress).